The chain runs to 262 residues: Elongator complex protein 5 (262 aa).

Disordered regions lie at residues 181–214 (TPLD…FKIE) and 229–262 (PYER…DLCI). Polar residues predominate over residues 200 to 211 (AEQTTEPASSTF). Residues 246–262 (DADDDFDEEDPDEDLCI) are compositionally biased toward acidic residues.

It belongs to the ELP5 family. As to quaternary structure, component of the elongator complex composed of Elp1, Elp2, Elp3, Elp4, Elp5 and Elp6. The elongator complex associates with and stabilizes microtubules; efficient interaction requires the full complex.

It localises to the cytoplasm. The protein localises to the nucleus. Its subcellular location is the cytoskeleton. The protein resides in the spindle. Its pathway is tRNA modification; 5-methoxycarbonylmethyl-2-thiouridine-tRNA biosynthesis. Its function is as follows. Component of the elongator complex, which is required for multiple tRNA modifications, including mcm5U (5-methoxycarbonylmethyl uridine), mcm5s2U (5-methoxycarbonylmethyl-2-thiouridine), and ncm5U (5-carbamoylmethyl uridine). The elongator complex catalyzes the formation of carboxymethyluridine in the wobble base at position 34 in tRNAs. Binding by the elongator complex stabilizes microtubules and promotes their growth. This induces central spindle asymmetry, promoting polarized signaling endosome trafficking during asymmetric cell division and cell fate assignation of sensory organ precursor cells. The sequence is that of Elongator complex protein 5 from Drosophila melanogaster (Fruit fly).